A 67-amino-acid chain; its full sequence is Ubiquinol-cytochrome c reductase complex assembly factor 6 (67 aa).

Over 1–8 the chain is Mitochondrial matrix; it reads MPGGVPWS. Residues 9–25 form a helical; Signal-anchor for type II membrane protein membrane-spanning segment; the sequence is AYLKMLSSSLLAMCAGA. Topologically, residues 26–67 are mitochondrial intermembrane; that stretch reads QVVHWYYRPDLTIPEIPPKPGELKTELLGLKERRHEPHVSQQ.

Belongs to the UQCC6 family. Interacts with UQCRC1. Interacts with UQCRQ. Interacts with UQCC5. Forms a complex, named COMB/coordinator of mitochondrial CYTB biogenesis, composed of UQCC1, UQCC2, UQCC4, UQCC5 and UQCC6; stabilizes nascent cytochrome b/MT-CYB and promotes its membrane insertion. Forms a complex, named COMA, composed of UQCC1, UQCC2 and UQCC4; activates MT-CYB translation. Forms a complex, named COMC, composed of UQCC1, UQCC2; UQCC3 and UQCC4; mediates MT-CYB hemylation and association with the first nuclear-encoded complex III subunit UQCRQ. Interacts with MT-CYB. As to expression, highly expressed in brown adipose, cardiac and skeletal muscle (at protein level).

Its subcellular location is the mitochondrion inner membrane. In terms of biological role, required for the assembly and stability of the mitochondrial ubiquinol-cytochrome c reductase complex (complex III or cytochrome b-c1 complex), a multisubunit transmembrane complex that is part of the mitochondrial electron transport chain (ETC) which drives oxidative phosphorylation. Mediates early complex III biogenesis. Participates in regulating the levels of electron transport chain proteins, and therefore energy supply, in response to changes in energy demand. Also required for cytochrome c oxidase complex (complex IV) assembly. The chain is Ubiquinol-cytochrome c reductase complex assembly factor 6 from Mus musculus (Mouse).